Here is a 49-residue protein sequence, read N- to C-terminus: MAVKKAALACSVCGSRNYSITASKNRTKRLELKKFCKHCGKMTLHKETR.

It belongs to the bacterial ribosomal protein bL33 family.

The protein is Large ribosomal subunit protein bL33B of Lactobacillus helveticus (strain DPC 4571).